A 612-amino-acid chain; its full sequence is Dihydroxy-acid dehydratase (612 aa).

Residue aspartate 81 participates in Mg(2+) binding. Residue cysteine 122 coordinates [2Fe-2S] cluster. Aspartate 123 and lysine 124 together coordinate Mg(2+). N6-carboxylysine is present on lysine 124. A [2Fe-2S] cluster-binding site is contributed by cysteine 195. Glutamate 491 lines the Mg(2+) pocket. Serine 517 functions as the Proton acceptor in the catalytic mechanism.

The protein belongs to the IlvD/Edd family. Homodimer. It depends on [2Fe-2S] cluster as a cofactor. Requires Mg(2+) as cofactor.

It carries out the reaction (2R)-2,3-dihydroxy-3-methylbutanoate = 3-methyl-2-oxobutanoate + H2O. The catalysed reaction is (2R,3R)-2,3-dihydroxy-3-methylpentanoate = (S)-3-methyl-2-oxopentanoate + H2O. It participates in amino-acid biosynthesis; L-isoleucine biosynthesis; L-isoleucine from 2-oxobutanoate: step 3/4. It functions in the pathway amino-acid biosynthesis; L-valine biosynthesis; L-valine from pyruvate: step 3/4. Its function is as follows. Functions in the biosynthesis of branched-chain amino acids. Catalyzes the dehydration of (2R,3R)-2,3-dihydroxy-3-methylpentanoate (2,3-dihydroxy-3-methylvalerate) into 2-oxo-3-methylpentanoate (2-oxo-3-methylvalerate) and of (2R)-2,3-dihydroxy-3-methylbutanoate (2,3-dihydroxyisovalerate) into 2-oxo-3-methylbutanoate (2-oxoisovalerate), the penultimate precursor to L-isoleucine and L-valine, respectively. The protein is Dihydroxy-acid dehydratase of Bartonella henselae (strain ATCC 49882 / DSM 28221 / CCUG 30454 / Houston 1) (Rochalimaea henselae).